A 180-amino-acid chain; its full sequence is Translation initiation factor IF-3 (180 aa).

It belongs to the IF-3 family. Monomer.

It is found in the cytoplasm. Its function is as follows. IF-3 binds to the 30S ribosomal subunit and shifts the equilibrium between 70S ribosomes and their 50S and 30S subunits in favor of the free subunits, thus enhancing the availability of 30S subunits on which protein synthesis initiation begins. The chain is Translation initiation factor IF-3 from Shewanella baltica (strain OS223).